A 4241-amino-acid polypeptide reads, in one-letter code: Intermembrane lipid transfer protein vps13E (4241 aa).

The Chorein N-terminal domain occupies 5–97 (ILPGLLKKIL…GPKDIINTFS (93 aa)). Residues 120 to 140 (IDSNSNNNNKKNAPSSSSSND) show a composition bias toward low complexity. 8 disordered regions span residues 120 to 143 (IDSN…DDFF), 234 to 340 (LSKN…QQQQ), 942 to 986 (LGTG…VEKE), 1220 to 1256 (NNNN…NQKP), 1345 to 1369 (TTTT…QNRH), 1534 to 1571 (KPSS…YNNN), 2148 to 2192 (QQQQ…PNVH), and 2217 to 2282 (VTEK…NNIN). Over residues 234-254 (LSKNTSTHQQQQPTFNPYVGS) the composition is skewed to polar residues. A compositionally biased stretch (low complexity) spans 255-264 (QQQQQQQPQQ). Residues 279–289 (FMNNKNSDEGI) show a composition bias toward polar residues. 3 stretches are compositionally biased toward low complexity: residues 290–313 (SSSS…LNDN), 325–340 (QPTP…QQQQ), and 942–952 (LGTGNGINNNN). The span at 968–986 (DDGKYPEQDDLDDSKVEKE) shows a compositional bias: basic and acidic residues. Residues 1220-1253 (NNNNNNNNNNNNNNNNNNNNNRNLNNNNNNNNNN) show a composition bias toward low complexity. Residues 1352 to 1369 (RYHHQNHHNHQHKKQNRH) are compositionally biased toward basic residues. 3 stretches are compositionally biased toward low complexity: residues 1538 to 1551 (KDNN…NNSD), 1559 to 1571 (DSSS…YNNN), and 2148 to 2177 (QQQQ…NNNN). Residues 2178-2188 (VSGNTINNKSV) are compositionally biased toward polar residues. Positions 2246-2259 (SDDDDDEGEDEDIG) are enriched in acidic residues. Residues 2265–2282 (DHSTSSAPTSRSNYNNIN) are compositionally biased toward polar residues. An SHR-BD domain is found at 2825 to 3134 (KIVFYNQYWI…IPYVWDLPLE (310 aa)). Disordered regions lie at residues 3973–4000 (PTTT…YPTE), 4059–4094 (YQHS…RQLQ), and 4109–4140 (KSMA…SGSG). Positions 3974-3984 (TTTTTTNTTTT) are enriched in low complexity. The segment covering 3985–4000 (PYQSSQNIHSTPYPTE) has biased composition (polar residues). Polar residues predominate over residues 4128–4140 (SNNRLSLTPSGSG).

It belongs to the VPS13 family.

Its subcellular location is the membrane. Its function is as follows. Mediates the transfer of lipids between membranes at organelle contact sites. The protein is Intermembrane lipid transfer protein vps13E (vps13E) of Dictyostelium discoideum (Social amoeba).